A 765-amino-acid polypeptide reads, in one-letter code: Endosialin (765 aa).

Residues 1–17 (MLLRLLLAWVAAVPALG) form the signal peptide. Over 18 to 695 (QVPWTPEPRA…GQSQRDDRWL (678 aa)) the chain is Extracellular. One can recognise a C-type lectin domain in the interval 30-156 (GPSSCYALFP…CTLAVDGYLC (127 aa)). 6 disulfides stabilise this stretch: C131/C147, C164/C213, C203/C230, C316/C326, C322/C335, and C337/C350. The Sushi domain occupies 162–232 (GACPALPLEV…WSQTGPLCPG (71 aa)). The EGF-like; calcium-binding domain maps to 312–351 (DTDECQIAGVCQQMCVNYVGGFECYCSEGHELEADGISCS). T401, T428, T448, T456, T459, and T466 each carry an O-linked (GalNAc...) threonine glycan. O-linked (GalNAc...) serine glycans are attached at residues S467 and S470. O-linked (GalNAc...) threonine glycosylation is present at T472. Residue S477 is glycosylated (O-linked (GalNAc...) serine). O-linked (GalNAc...) threonine glycans are attached at residues T488, T517, T520, T535, T552, T554, T556, T570, T571, T604, and T613. Residues 548-675 (MSPDTHTITY…QLPSVPSTAA (128 aa)) form a disordered region. Residues 622-633 (PAFPSSPLPPQR) are compositionally biased toward pro residues. Residues S626 and S627 are each glycosylated (O-linked (GalNAc...) serine). O-linked (GalNAc...) threonine glycans are attached at residues T635 and T638. Over residues 635–647 (TNQTSSISPTHSY) the composition is skewed to polar residues. 2 O-linked (GalNAc...) serine glycosylation sites follow: S639 and S640. T644 carries O-linked (GalNAc...) threonine glycosylation. An O-linked (GalNAc...) serine glycan is attached at S663. O-linked (GalNAc...) threonine glycosylation occurs at T673. A helical membrane pass occupies residues 696–716 (LVALLVPTCVFLVVLLALGIV). The Cytoplasmic segment spans residues 717–765 (YCTRCGSHAPNKRITDCYRWVTHAGNKSSTEPMPPRGSLTGVQTCRTSV). Position 754 is a phosphoserine (S754).

Interacts with PDGFRA; this interaction promotes PDGF receptor signaling pathway. Interacts with integrin beta-1/ITGB1. Interacts with insulin receptor/INSR; this interaction diminishes INSR autophosphorylation. Post-translationally, O-glycosylated by sialylated oligosaccharides. In terms of processing, may be N-glycosylated. As to expression, expressed in cell lines derived from endothelial cells, embryonic fibroblasts and preadipocytes. Expressed in skeletal muscle by a subset of pericytes.

The protein resides in the membrane. In terms of biological role, cell surface glycoprotein involved in various biological processes including angiogenesis, immune response modulation, and tissue remodeling and repair. Participates in pericyte proliferation through positive modulation of the PDGF receptor signaling pathway. Acts as a scaffold for factor X, triggering allosteric changes and the spatial re-alignment of factor X with the TF-factor VIIa complex, thereby enhancing coagulation activation. Modulates the insulin signaling pathway by interacting with insulin receptor/INSR and by diminishing its capacity to be autophosphorylated in response to insulin. Also regulates LPS-induced inflammatory responses in macrophages by favoring production of proinflammatory cytokines. In Mus musculus (Mouse), this protein is Endosialin (Cd248).